The primary structure comprises 196 residues: Ribonuclease HII (196 aa).

Residues 9–196 (KLVAGVDEVG…KPVRHALGIE (188 aa)) enclose the RNase H type-2 domain. A divalent metal cation contacts are provided by D15, E16, and D107.

The protein belongs to the RNase HII family. It depends on Mn(2+) as a cofactor. Mg(2+) is required as a cofactor.

It localises to the cytoplasm. The enzyme catalyses Endonucleolytic cleavage to 5'-phosphomonoester.. In terms of biological role, endonuclease that specifically degrades the RNA of RNA-DNA hybrids. The polypeptide is Ribonuclease HII (Aeromonas salmonicida (strain A449)).